Consider the following 46-residue polypeptide: Osteocalcin 2 (46 aa).

The Gla domain occupies 1–43 (AVPAGTLSPLQMESLREVCEVNVACDEMADTAGIVAAYTXFYG). A Phosphothreonine modification is found at threonine 6. Glutamate 13, glutamate 17, glutamate 20, and aspartate 26 together coordinate Ca(2+). 4-carboxyglutamate is present on residues glutamate 13, glutamate 17, and glutamate 20. Cysteines 19 and 25 form a disulfide. Glutamate 27 carries the 4-carboxyglutamate modification.

The protein belongs to the osteocalcin/matrix Gla protein family. Post-translationally, gamma-carboxyglutamate residues are formed by vitamin K dependent carboxylation by GGCX. These residues are essential for the binding of calcium.

It is found in the secreted. The carboxylated form is one of the main organic components of the bone matrix, which constitutes 1-2% of the total bone protein. The carboxylated form binds strongly to apatite and calcium. The sequence is that of Osteocalcin 2 from Solea senegalensis (Senegalese sole).